Here is a 63-residue protein sequence, read N- to C-terminus: Large ribosomal subunit protein uL29 (63 aa).

Belongs to the universal ribosomal protein uL29 family.

The chain is Large ribosomal subunit protein uL29 from Bacillus cereus (strain ATCC 14579 / DSM 31 / CCUG 7414 / JCM 2152 / NBRC 15305 / NCIMB 9373 / NCTC 2599 / NRRL B-3711).